A 191-amino-acid polypeptide reads, in one-letter code: MSDKKKNAEEFEETFSDKTSEDESTVENETVEENENEDVQAISEVDDLKAQLDEMEDKYLRASAELSNMNNRFRNERQTLQRYRSQDLGKKLLPAIDNLERAVAIEVEGEQNESLKKGVEMTLESLRSAMQEEGIEEISAQGETFDPTLHQAVQTVPATEDHPAETVVEVLQKGYKIYDRVLRASMVVVAQ.

The span at 1–21 (MSDKKKNAEEFEETFSDKTSE) shows a compositional bias: basic and acidic residues. The interval 1-39 (MSDKKKNAEEFEETFSDKTSEDESTVENETVEENENEDV) is disordered. The span at 22–38 (DESTVENETVEENENED) shows a compositional bias: acidic residues.

It belongs to the GrpE family. In terms of assembly, homodimer.

It localises to the cytoplasm. Functionally, participates actively in the response to hyperosmotic and heat shock by preventing the aggregation of stress-denatured proteins, in association with DnaK and GrpE. It is the nucleotide exchange factor for DnaK and may function as a thermosensor. Unfolded proteins bind initially to DnaJ; upon interaction with the DnaJ-bound protein, DnaK hydrolyzes its bound ATP, resulting in the formation of a stable complex. GrpE releases ADP from DnaK; ATP binding to DnaK triggers the release of the substrate protein, thus completing the reaction cycle. Several rounds of ATP-dependent interactions between DnaJ, DnaK and GrpE are required for fully efficient folding. This is Protein GrpE from Tetragenococcus halophilus (Pediococcus halophilus).